Reading from the N-terminus, the 491-residue chain is 3-octaprenyl-4-hydroxybenzoate carboxy-lyase (491 aa).

Asn176 serves as a coordination point for Mn(2+). Prenylated FMN-binding positions include 179–181 (IYR), 193–195 (RWL), and 198–199 (RG). A Mn(2+)-binding site is contributed by Glu242. The Proton donor role is filled by Asp291.

It belongs to the UbiD family. In terms of assembly, homohexamer. Requires prenylated FMN as cofactor. It depends on Mn(2+) as a cofactor.

The protein localises to the cell membrane. The enzyme catalyses a 4-hydroxy-3-(all-trans-polyprenyl)benzoate + H(+) = a 2-(all-trans-polyprenyl)phenol + CO2. Its pathway is cofactor biosynthesis; ubiquinone biosynthesis. Functionally, catalyzes the decarboxylation of 3-octaprenyl-4-hydroxy benzoate to 2-octaprenylphenol, an intermediate step in ubiquinone biosynthesis. This Chromobacterium violaceum (strain ATCC 12472 / DSM 30191 / JCM 1249 / CCUG 213 / NBRC 12614 / NCIMB 9131 / NCTC 9757 / MK) protein is 3-octaprenyl-4-hydroxybenzoate carboxy-lyase.